We begin with the raw amino-acid sequence, 345 residues long: Phosphoribosylformylglycinamidine cyclo-ligase (345 aa).

Belongs to the AIR synthase family.

The protein localises to the cytoplasm. It carries out the reaction 2-formamido-N(1)-(5-O-phospho-beta-D-ribosyl)acetamidine + ATP = 5-amino-1-(5-phospho-beta-D-ribosyl)imidazole + ADP + phosphate + H(+). It participates in purine metabolism; IMP biosynthesis via de novo pathway; 5-amino-1-(5-phospho-D-ribosyl)imidazole from N(2)-formyl-N(1)-(5-phospho-D-ribosyl)glycinamide: step 2/2. The sequence is that of Phosphoribosylformylglycinamidine cyclo-ligase from Escherichia fergusonii (strain ATCC 35469 / DSM 13698 / CCUG 18766 / IAM 14443 / JCM 21226 / LMG 7866 / NBRC 102419 / NCTC 12128 / CDC 0568-73).